Reading from the N-terminus, the 409-residue chain is Ribose-phosphate pyrophosphokinase 1 (409 aa).

Positions 128, 130, and 143 each coordinate Mg(2+). S199 carries the post-translational modification Phosphoserine.

Belongs to the ribose-phosphate pyrophosphokinase family.

Its subcellular location is the cytoplasm. It catalyses the reaction D-ribose 5-phosphate + ATP = 5-phospho-alpha-D-ribose 1-diphosphate + AMP + H(+). It participates in metabolic intermediate biosynthesis; 5-phospho-alpha-D-ribose 1-diphosphate biosynthesis; 5-phospho-alpha-D-ribose 1-diphosphate from D-ribose 5-phosphate (route I): step 1/1. Its function is as follows. 5-phosphoribose 1-diphosphate synthase involved in nucleotide, histidine, and tryptophan biosynthesis. Active in heteromultimeric complexes with other 5-phosphoribose 1-diphosphate synthases. This Schizosaccharomyces pombe (strain 972 / ATCC 24843) (Fission yeast) protein is Ribose-phosphate pyrophosphokinase 1.